The following is a 428-amino-acid chain: Dihydroorotase (428 aa).

Zn(2+) is bound by residues His-60 and His-62. Substrate is bound by residues 62–64 (HLR) and Asn-94. 3 residues coordinate Zn(2+): Asp-152, His-179, and His-232. Asn-278 is a substrate binding site. Asp-305 serves as a coordination point for Zn(2+). Residue Asp-305 is part of the active site. Substrate is bound by residues His-309 and 323–324 (FG).

The protein belongs to the metallo-dependent hydrolases superfamily. DHOase family. Class I DHOase subfamily. Requires Zn(2+) as cofactor.

It carries out the reaction (S)-dihydroorotate + H2O = N-carbamoyl-L-aspartate + H(+). It participates in pyrimidine metabolism; UMP biosynthesis via de novo pathway; (S)-dihydroorotate from bicarbonate: step 3/3. In terms of biological role, catalyzes the reversible cyclization of carbamoyl aspartate to dihydroorotate. This Anoxybacillus flavithermus (strain DSM 21510 / WK1) protein is Dihydroorotase.